We begin with the raw amino-acid sequence, 663 residues long: MTGARASAAEQRRAGRSGQARAAERAAGMSGAGRALAALLLAASVLSAALLAPGGSSGRDAQAAPPRDLDKKRHAELKMDQALLLIHNELLWTNLTVYWKSECCYHCLFQVLVNVPQSPKAGKPSAAAASVSTQHGSILQLNDTLEEKEVCRLEYRFGEFGNYSLLVKNIHNGVSEIACDLAVNEDPVDSNLPVSIAFLIGLAVIIVISFLRLLLSLDDFNNWISKAISSRETDRLINSELGSPSRTDPLDGDVQPATWRLSALPPRLRSVDTFRGIALILMVFVNYGGGKYWYFKHASWNGLTVADLVFPWFVFIMGSSIFLSMTSILQRGCSKFRLLGKIAWRSFLLICIGIIIVNPNYCLGPLSWDKVRIPGVLQRLGVTYFVVAVLELLFAKPVPEHCASERSCLSLRDITSSWPQWLLILVLEGLWLGLTFLLPVPGCPTGYLGPGGIGDFGKYPNCTGGAAGYIDRLLLGDDHLYQHPSSAVLYHTEVAYDPEGILGTINSIVMAFLGVQAGKILLYYKARTKDILIRFTAWCCILGLISVALTKVSENEGFIPVNKNLWSLSYVTTLSSFAFFILLVLYPVVDVKGLWTGTPFFYPGMNSILVYVGHEVFENYFPFQWKLKDNQSHKEHLTQNIVATALWVLIAYILYRKKIFWKI.

Positions 1–24 are disordered; sequence MTGARASAAEQRRAGRSGQARAAE. Over 1-190 the chain is Lumenal, vesicle; sequence MTGARASAAE…LAVNEDPVDS (190 aa). N-linked (GlcNAc...) asparagine glycosylation is found at Asn-94, Asn-142, and Asn-162. Cys-151 and Cys-462 are joined by a disulfide. Residues 191-211 form a helical membrane-spanning segment; it reads NLPVSIAFLIGLAVIIVISFL. The Cytoplasmic portion of the chain corresponds to 212-275; that stretch reads RLLLSLDDFN…PRLRSVDTFR (64 aa). Phosphoserine occurs at positions 243 and 245. The chain crosses the membrane as a helical span at residues 276 to 296; the sequence is GIALILMVFVNYGGGKYWYFK. His-297 is an active-site residue. Topologically, residues 297–302 are lumenal, vesicle; it reads HASWNG. The helical transmembrane segment at 303–323 threads the bilayer; sequence LTVADLVFPWFVFIMGSSIFL. Topologically, residues 324–345 are cytoplasmic; it reads SMTSILQRGCSKFRLLGKIAWR. Residues 346-366 form a helical membrane-spanning segment; sequence SFLLICIGIIIVNPNYCLGPL. The Lumenal, vesicle portion of the chain corresponds to 367-374; the sequence is SWDKVRIP. Residues 375 to 395 form a helical membrane-spanning segment; the sequence is GVLQRLGVTYFVVAVLELLFA. Residues 396–420 lie on the Cytoplasmic side of the membrane; sequence KPVPEHCASERSCLSLRDITSSWPQ. A helical transmembrane segment spans residues 421–441; it reads WLLILVLEGLWLGLTFLLPVP. At 442 to 500 the chain is on the lumenal, vesicle side; it reads GCPTGYLGPGGIGDFGKYPNCTGGAAGYIDRLLLGDDHLYQHPSSAVLYHTEVAYDPEG. The chain crosses the membrane as a helical span at residues 501–521; sequence ILGTINSIVMAFLGVQAGKIL. At 522 to 529 the chain is on the cytoplasmic side; that stretch reads LYYKARTK. A helical transmembrane segment spans residues 530–550; the sequence is DILIRFTAWCCILGLISVALT. Residues 551–564 lie on the Lumenal, vesicle side of the membrane; it reads KVSENEGFIPVNKN. Residues 565 to 585 traverse the membrane as a helical segment; that stretch reads LWSLSYVTTLSSFAFFILLVL. At 586 to 592 the chain is on the cytoplasmic side; sequence YPVVDVK. Residues 593-613 form a helical membrane-spanning segment; it reads GLWTGTPFFYPGMNSILVYVG. At 614 to 634 the chain is on the lumenal, vesicle side; sequence HEVFENYFPFQWKLKDNQSHK. The lysosomal targeting region stretch occupies residues 624–635; sequence QWKLKDNQSHKE. A helical transmembrane segment spans residues 635 to 655; the sequence is EHLTQNIVATALWVLIAYILY. Topologically, residues 656 to 663 are cytoplasmic; the sequence is RKKIFWKI.

In terms of assembly, homooligomer. Homooligomerization is necessary for enzyme activity. In terms of processing, undergoes intralysosomal proteolytic cleavage; occurs within the end of the first and/or the beginning of the second luminal domain and is essential for the activation of the enzyme. Glycosylated. Widely expressed, with highest level in leukocytes, heart, liver, skeletal muscle, lung, placenta and liver.

Its subcellular location is the lysosome membrane. The catalysed reaction is alpha-D-glucosaminyl-[heparan sulfate](n) + acetyl-CoA = N-acetyl-alpha-D-glucosaminyl-[heparan sulfate](n) + CoA + H(+). In terms of biological role, lysosomal acetyltransferase that acetylates the non-reducing terminal alpha-glucosamine residue of intralysosomal heparin or heparan sulfate, converting it into a substrate for luminal alpha-N-acetyl glucosaminidase. This is Heparan-alpha-glucosaminide N-acetyltransferase (HGSNAT) from Homo sapiens (Human).